A 70-amino-acid chain; its full sequence is Cytochrome c oxidase subunit 8B, mitochondrial (70 aa).

The transit peptide at 1–24 (MPRLPPILRLLQAPEKYTVIPKAR) directs the protein to the mitochondrion. The Mitochondrial matrix segment spans residues 25 to 35 (ISSKPAKSPTS). The chain crosses the membrane as a helical span at residues 36-59 (AMDQAVGMSVIIAGFMVPAGWVLS). The Mitochondrial intermembrane segment spans residues 60–70 (HLESYKRSSAA).

It belongs to the cytochrome c oxidase VIII family. In terms of assembly, component of the cytochrome c oxidase (complex IV, CIV), a multisubunit enzyme composed of 14 subunits. The complex is composed of a catalytic core of 3 subunits MT-CO1, MT-CO2 and MT-CO3, encoded in the mitochondrial DNA, and 11 supernumerary subunits COX4I, COX5A, COX5B, COX6A, COX6B, COX6C, COX7A, COX7B, COX7C, COX8 and NDUFA4, which are encoded in the nuclear genome. The complex exists as a monomer or a dimer and forms supercomplexes (SCs) in the inner mitochondrial membrane with NADH-ubiquinone oxidoreductase (complex I, CI) and ubiquinol-cytochrome c oxidoreductase (cytochrome b-c1 complex, complex III, CIII), resulting in different assemblies (supercomplex SCI(1)III(2)IV(1) and megacomplex MCI(2)III(2)IV(2)).

It is found in the mitochondrion inner membrane. Its pathway is energy metabolism; oxidative phosphorylation. Its function is as follows. Component of the cytochrome c oxidase, the last enzyme in the mitochondrial electron transport chain which drives oxidative phosphorylation. The respiratory chain contains 3 multisubunit complexes succinate dehydrogenase (complex II, CII), ubiquinol-cytochrome c oxidoreductase (cytochrome b-c1 complex, complex III, CIII) and cytochrome c oxidase (complex IV, CIV), that cooperate to transfer electrons derived from NADH and succinate to molecular oxygen, creating an electrochemical gradient over the inner membrane that drives transmembrane transport and the ATP synthase. Cytochrome c oxidase is the component of the respiratory chain that catalyzes the reduction of oxygen to water. Electrons originating from reduced cytochrome c in the intermembrane space (IMS) are transferred via the dinuclear copper A center (CU(A)) of subunit 2 and heme A of subunit 1 to the active site in subunit 1, a binuclear center (BNC) formed by heme A3 and copper B (CU(B)). The BNC reduces molecular oxygen to 2 water molecules using 4 electrons from cytochrome c in the IMS and 4 protons from the mitochondrial matrix. The polypeptide is Cytochrome c oxidase subunit 8B, mitochondrial (Cox8b) (Rattus norvegicus (Rat)).